We begin with the raw amino-acid sequence, 154 residues long: Ascorbate-specific PTS system EIIA component (154 aa).

One can recognise a PTS EIIA type-2 domain in the interval 6-150 (SLAVNKSIRL…QEVLDLIDRT (145 aa)). The active-site Tele-phosphohistidine intermediate is the His68. His68 carries the phosphohistidine modification.

It localises to the cytoplasm. Its function is as follows. The phosphoenolpyruvate-dependent sugar phosphotransferase system (sugar PTS), a major carbohydrate active transport system, catalyzes the phosphorylation of incoming sugar substrates concomitantly with their translocation across the cell membrane. The enzyme II UlaABC PTS system is involved in ascorbate transport. The chain is Ascorbate-specific PTS system EIIA component (ulaC) from Shigella dysenteriae serotype 1 (strain Sd197).